The following is a 159-amino-acid chain: Transcription elongation factor GreA (159 aa).

Belongs to the GreA/GreB family.

Functionally, necessary for efficient RNA polymerase transcription elongation past template-encoded arresting sites. The arresting sites in DNA have the property of trapping a certain fraction of elongating RNA polymerases that pass through, resulting in locked ternary complexes. Cleavage of the nascent transcript by cleavage factors such as GreA or GreB allows the resumption of elongation from the new 3'terminus. GreA releases sequences of 2 to 3 nucleotides. In Buchnera aphidicola subsp. Baizongia pistaciae (strain Bp), this protein is Transcription elongation factor GreA.